A 99-amino-acid chain; its full sequence is Large ribosomal subunit protein uL23 (99 aa).

This sequence belongs to the universal ribosomal protein uL23 family. Part of the 50S ribosomal subunit. Contacts protein L29, and trigger factor when it is bound to the ribosome.

One of the early assembly proteins it binds 23S rRNA. One of the proteins that surrounds the polypeptide exit tunnel on the outside of the ribosome. Forms the main docking site for trigger factor binding to the ribosome. This Magnetococcus marinus (strain ATCC BAA-1437 / JCM 17883 / MC-1) protein is Large ribosomal subunit protein uL23.